The primary structure comprises 272 residues: Indole-3-glycerol phosphate synthase (272 aa).

It belongs to the TrpC family.

It carries out the reaction 1-(2-carboxyphenylamino)-1-deoxy-D-ribulose 5-phosphate + H(+) = (1S,2R)-1-C-(indol-3-yl)glycerol 3-phosphate + CO2 + H2O. It participates in amino-acid biosynthesis; L-tryptophan biosynthesis; L-tryptophan from chorismate: step 4/5. The sequence is that of Indole-3-glycerol phosphate synthase from Paenarthrobacter aurescens (strain TC1).